Consider the following 255-residue polypeptide: 4-hydroxy-tetrahydrodipicolinate reductase (255 aa).

NAD(+)-binding positions include 9 to 14, 89 to 91, and 115 to 118; these read GYRGKM, GTT, and APNF. The active-site Proton donor/acceptor is the His-145. His-146 contacts (S)-2,3,4,5-tetrahydrodipicolinate. Catalysis depends on Lys-149, which acts as the Proton donor. A (S)-2,3,4,5-tetrahydrodipicolinate-binding site is contributed by 155–156; that stretch reads GT.

Belongs to the DapB family.

The protein localises to the cytoplasm. It catalyses the reaction (S)-2,3,4,5-tetrahydrodipicolinate + NAD(+) + H2O = (2S,4S)-4-hydroxy-2,3,4,5-tetrahydrodipicolinate + NADH + H(+). The enzyme catalyses (S)-2,3,4,5-tetrahydrodipicolinate + NADP(+) + H2O = (2S,4S)-4-hydroxy-2,3,4,5-tetrahydrodipicolinate + NADPH + H(+). Its pathway is amino-acid biosynthesis; L-lysine biosynthesis via DAP pathway; (S)-tetrahydrodipicolinate from L-aspartate: step 4/4. Its function is as follows. Catalyzes the conversion of 4-hydroxy-tetrahydrodipicolinate (HTPA) to tetrahydrodipicolinate. This chain is 4-hydroxy-tetrahydrodipicolinate reductase, found in Streptococcus uberis (strain ATCC BAA-854 / 0140J).